The following is a 321-amino-acid chain: Anthranilate phosphoribosyltransferase (321 aa).

5-phospho-alpha-D-ribose 1-diphosphate-binding positions include G72, 75–76 (GD), T80, 82–85 (NVST), 99–107 (KHGNVSITS), and S111. Position 72 (G72) interacts with anthranilate. Residue S84 participates in Mg(2+) binding. An anthranilate-binding site is contributed by N102. R157 serves as a coordination point for anthranilate. Mg(2+) contacts are provided by D216 and E217.

This sequence belongs to the anthranilate phosphoribosyltransferase family. As to quaternary structure, homodimer. Mg(2+) is required as a cofactor.

The catalysed reaction is N-(5-phospho-beta-D-ribosyl)anthranilate + diphosphate = 5-phospho-alpha-D-ribose 1-diphosphate + anthranilate. It functions in the pathway amino-acid biosynthesis; L-tryptophan biosynthesis; L-tryptophan from chorismate: step 2/5. Functionally, catalyzes the transfer of the phosphoribosyl group of 5-phosphorylribose-1-pyrophosphate (PRPP) to anthranilate to yield N-(5'-phosphoribosyl)-anthranilate (PRA). In Methanococcus maripaludis (strain DSM 14266 / JCM 13030 / NBRC 101832 / S2 / LL), this protein is Anthranilate phosphoribosyltransferase.